Here is a 443-residue protein sequence, read N- to C-terminus: Ribosomal protein uS12 methylthiotransferase RimO (443 aa).

The MTTase N-terminal domain occupies 5-116; it reads PSVAVAHLGC…IVDVIQRAEA (112 aa). [4Fe-4S] cluster contacts are provided by C14, C50, C79, C154, C158, and C161. A Radical SAM core domain is found at 140–370; sequence TTTEGTAYVR…ALQQPISWQQ (231 aa). In terms of domain architecture, TRAM spans 372–442; sequence QQEVGKTVQV…AYDLQGQLVS (71 aa).

It belongs to the methylthiotransferase family. RimO subfamily. The cofactor is [4Fe-4S] cluster.

The protein localises to the cytoplasm. It carries out the reaction L-aspartate(89)-[ribosomal protein uS12]-hydrogen + (sulfur carrier)-SH + AH2 + 2 S-adenosyl-L-methionine = 3-methylsulfanyl-L-aspartate(89)-[ribosomal protein uS12]-hydrogen + (sulfur carrier)-H + 5'-deoxyadenosine + L-methionine + A + S-adenosyl-L-homocysteine + 2 H(+). Its function is as follows. Catalyzes the methylthiolation of an aspartic acid residue of ribosomal protein uS12. This is Ribosomal protein uS12 methylthiotransferase RimO from Acaryochloris marina (strain MBIC 11017).